We begin with the raw amino-acid sequence, 433 residues long: Enolase (433 aa).

Q167 provides a ligand contact to (2R)-2-phosphoglycerate. The Proton donor role is filled by E209. Mg(2+) contacts are provided by D246, E291, and D318. (2R)-2-phosphoglycerate-binding residues include K343, R372, S373, and K394. K343 acts as the Proton acceptor in catalysis.

The protein belongs to the enolase family. Component of the RNA degradosome, a multiprotein complex involved in RNA processing and mRNA degradation. It depends on Mg(2+) as a cofactor.

The protein localises to the cytoplasm. It localises to the secreted. Its subcellular location is the cell surface. The catalysed reaction is (2R)-2-phosphoglycerate = phosphoenolpyruvate + H2O. Its pathway is carbohydrate degradation; glycolysis; pyruvate from D-glyceraldehyde 3-phosphate: step 4/5. Its function is as follows. Catalyzes the reversible conversion of 2-phosphoglycerate (2-PG) into phosphoenolpyruvate (PEP). It is essential for the degradation of carbohydrates via glycolysis. The protein is Enolase of Aeromonas hydrophila subsp. hydrophila (strain ATCC 7966 / DSM 30187 / BCRC 13018 / CCUG 14551 / JCM 1027 / KCTC 2358 / NCIMB 9240 / NCTC 8049).